The following is a 110-amino-acid chain: Insulin-2 (110 aa).

The first 24 residues, 1–24 (MALWIRFLPLLALLILWEPRPAQA), serve as a signal peptide directing secretion. Intrachain disulfides connect Cys31-Cys96, Cys43-Cys109, and Cys95-Cys100. Positions 57 to 87 (EVEDPQVAQLELGGGPGAGDLQTLALEVARQ) are cleaved as a propeptide — c peptide.

The protein belongs to the insulin family. As to quaternary structure, heterodimer of a B chain and an A chain linked by two disulfide bonds.

The protein resides in the secreted. Functionally, insulin decreases blood glucose concentration. It increases cell permeability to monosaccharides, amino acids and fatty acids. It accelerates glycolysis, the pentose phosphate cycle, and glycogen synthesis in liver. In Rattus norvegicus (Rat), this protein is Insulin-2 (Ins2).